Reading from the N-terminus, the 411-residue chain is LL-diaminopimelate aminotransferase (411 aa).

Positions 15 and 42 each coordinate substrate. Pyridoxal 5'-phosphate contacts are provided by residues Y72, 108 to 109 (SK), Y132, N187, Y218, and 246 to 248 (SFS). Residues K109, Y132, and N187 each contribute to the substrate site. K249 is subject to N6-(pyridoxal phosphate)lysine. Positions 257 and 292 each coordinate pyridoxal 5'-phosphate. Positions 292 and 388 each coordinate substrate.

Belongs to the class-I pyridoxal-phosphate-dependent aminotransferase family. LL-diaminopimelate aminotransferase subfamily. In terms of assembly, homodimer. Pyridoxal 5'-phosphate is required as a cofactor.

It catalyses the reaction (2S,6S)-2,6-diaminopimelate + 2-oxoglutarate = (S)-2,3,4,5-tetrahydrodipicolinate + L-glutamate + H2O + H(+). It participates in amino-acid biosynthesis; L-lysine biosynthesis via DAP pathway; LL-2,6-diaminopimelate from (S)-tetrahydrodipicolinate (aminotransferase route): step 1/1. In terms of biological role, involved in the synthesis of meso-diaminopimelate (m-DAP or DL-DAP), required for both lysine and peptidoglycan biosynthesis. Catalyzes the direct conversion of tetrahydrodipicolinate to LL-diaminopimelate. The chain is LL-diaminopimelate aminotransferase from Synechococcus elongatus (strain ATCC 33912 / PCC 7942 / FACHB-805) (Anacystis nidulans R2).